The sequence spans 579 residues: Probable zinc metalloprotease EGY1, chloroplastic (579 aa).

2 disordered regions span residues 1–42 (MAAA…PASA) and 78–146 (GGGG…NEPP). The N-terminal 44 residues, 1–44 (MAAAAAALASSPMVHLTASRLRLPRPARSPAAATPSPSPASAAC), are a transit peptide targeting the chloroplast. Positions 16–42 (LTASRLRLPRPARSPAAATPSPSPASA) are enriched in low complexity. Gly residues predominate over residues 78-92 (GGGGGGGGGGGGTGG). Low complexity-rich tracts occupy residues 104–115 (AAAAEAKVGGAV) and 125–137 (SGSF…SSSG). 8 helical membrane passes run 272–292 (YVIS…LGIA), 321–341 (LLPF…IQLF), 357–377 (LSIP…ITQF), 392–412 (MAGP…GLLL), 419–439 (ASDL…LGLV), 452–472 (ATVA…TTAF), 505–525 (LLGL…YVLI), and 547–567 (AALI…WDEL).

This sequence belongs to the peptidase M50B family.

It localises to the plastid. Its subcellular location is the chloroplast membrane. In terms of biological role, probable membrane-associated metalloprotease that may be involved in chloroplast development. The sequence is that of Probable zinc metalloprotease EGY1, chloroplastic (EGY1) from Oryza sativa subsp. japonica (Rice).